Reading from the N-terminus, the 245-residue chain is Ribonuclease PH (245 aa).

Phosphate contacts are provided by residues Arg-87 and 125–127 (GTR).

This sequence belongs to the RNase PH family. Homohexameric ring arranged as a trimer of dimers.

It catalyses the reaction tRNA(n+1) + phosphate = tRNA(n) + a ribonucleoside 5'-diphosphate. Phosphorolytic 3'-5' exoribonuclease that plays an important role in tRNA 3'-end maturation. Removes nucleotide residues following the 3'-CCA terminus of tRNAs; can also add nucleotides to the ends of RNA molecules by using nucleoside diphosphates as substrates, but this may not be physiologically important. Probably plays a role in initiation of 16S rRNA degradation (leading to ribosome degradation) during starvation. The sequence is that of Ribonuclease PH from Streptomyces coelicolor (strain ATCC BAA-471 / A3(2) / M145).